We begin with the raw amino-acid sequence, 592 residues long: Aspartate--tRNA ligase (592 aa).

Glutamate 173 contributes to the L-aspartate binding site. The interval 197–200 (QLFK) is aspartate. Position 219 (arginine 219) interacts with L-aspartate. ATP contacts are provided by residues 219–221 (RDE) and glutamine 228. Position 448 (histidine 448) interacts with L-aspartate. Glutamate 482 is an ATP binding site. Arginine 489 contributes to the L-aspartate binding site. 534–537 (GLDR) contributes to the ATP binding site.

This sequence belongs to the class-II aminoacyl-tRNA synthetase family. Type 1 subfamily. In terms of assembly, homodimer.

It localises to the cytoplasm. It carries out the reaction tRNA(Asp) + L-aspartate + ATP = L-aspartyl-tRNA(Asp) + AMP + diphosphate. Catalyzes the attachment of L-aspartate to tRNA(Asp) in a two-step reaction: L-aspartate is first activated by ATP to form Asp-AMP and then transferred to the acceptor end of tRNA(Asp). The chain is Aspartate--tRNA ligase from Shewanella baltica (strain OS195).